The primary structure comprises 254 residues: MYTVKQIKELIEKHSQDESYIHELVKDDKRKSAQKLIEKWHKEREKQQQLHAAWHEMLQFENNAKAQGYTCIAGIDEAGRGPLAGPVVAAAVILKDDTVLLGLNDSKQLSEKKRLAYYDLIQKEALDIGIGIVDAATIDEINIYEASRLAMVRAVEQLAHTPDYLLIDAMTLPLPIHQENIIKGDAKSASIAAGACIAKVTRDQMMEEYGRQYPEYQFEKHKGYGTKEHLAAIQTHGAAPIHRLSFAPVKSVIS.

The RNase H type-2 domain occupies 70–254 (TCIAGIDEAG…SFAPVKSVIS (185 aa)). Asp-76, Glu-77, and Asp-168 together coordinate a divalent metal cation.

It belongs to the RNase HII family. Mn(2+) is required as a cofactor. The cofactor is Mg(2+).

It localises to the cytoplasm. The enzyme catalyses Endonucleolytic cleavage to 5'-phosphomonoester.. Endonuclease that specifically degrades the RNA of RNA-DNA hybrids. This Bacillus pumilus (strain SAFR-032) protein is Ribonuclease HII.